A 505-amino-acid chain; its full sequence is MITLTGHTLTIEEMKRLLLEGEGVTACPNSMQKVAECREVVEKIVEDGKVVYGITTGFGKFSDVLIQKDDVKALQHNLIQSHACGIGDPFPEEVSRGMLILRANTMLKGVSGVRPLVVNMLLEFVNRKIHPVVPQQGSLGASGDLAPLSHLALVLLGEGEVFYKGKRVHAMVALTEEGLEPIELEAKEGLALINGTQAMTAQGVLSYIEAEATAYQAEFIASMTIEGLQGIIDAFDENVHKARGYKEQVEVASRIRDILHDSKLTTKQGELRVQDAYSLRCIPQVHGASWQVLNYVKEKLEIEMNAATDNPLIFDGGEKVISGGNFHGQPIAFAMDFLKVGMAELANISERRIERLVNPQLNDLPPFLSPEPGLQSGAMIMQYAAASLVSENKTLAHPASVDSIPSSANQEDHVSMGTIASRHAHQIIQNVRRVLSIEMICAMQAAEYRGIENMSTVTKSFYHQGRQQVPSITNDRIFSTDIENIAYWLKTNYSIKERLDVNAAL.

Residues Ala-141–Gly-143 constitute a cross-link (5-imidazolinone (Ala-Gly)). Ser-142 carries the 2,3-didehydroalanine (Ser) modification.

It belongs to the PAL/histidase family. In terms of processing, contains an active site 4-methylidene-imidazol-5-one (MIO), which is formed autocatalytically by cyclization and dehydration of residues Ala-Ser-Gly.

It localises to the cytoplasm. It carries out the reaction L-histidine = trans-urocanate + NH4(+). It participates in amino-acid degradation; L-histidine degradation into L-glutamate; N-formimidoyl-L-glutamate from L-histidine: step 1/3. The sequence is that of Histidine ammonia-lyase from Bacillus cereus (strain AH187).